Consider the following 684-residue polypeptide: MAGPRACAPLLLLLLLGELLAAAGAQRVGLPGPPGPPGPPGKPGQDGIDGEAGPPGLPGPPGPKGAPGKPGKPGEAGLPGLPGVDGLTGRDGPPGPKGAPGERGSLGPPGPPGLGGKGLPGPPGEAGVSGPPGGIGLRGPPGPSGLPGLPGPPGPPGPPGHPGVLPEGATDLQCPSICPPGPPGPPGMPGFKGPTGYKGEQGEVGKDGEKGDPGPPGPAGLPGSVGLQGPRGLRGLPGPLGPPGDRGPIGFRGPPGIPGAPGKAGDRGERGPEGFRGPKGDLGRPGPKGTPGVAGPSGEPGMPGKDGQNGVPGLDGQKGEAGRNGAPGEKGPNGLPGLPGRAGSKGEKGERGRAGELGEAGPSGEPGVPGDAGMPGERGEAGHRGSAGALGPQGPPGAPGVRGFQGQKGSMGDPGLPGPQGLRGDVGDRGPGGAAGPKGDQGIAGSDGLPGDKGELGPSGLVGPKGESGSRGELGPKGTQGPNGTSGVQGVPGPPGPLGLQGVPGVPGITGKPGVPGKEASEQRIRELCGGMISEQIAQLAAHLRKPLAPGSIGRPGPAGPPGPPGPPGSIGHPGARGPPGYRGPTGELGDPGPRGNQGDRGDKGAAGAGLDGPEGDQGPQGPQGVPGTSKDGQDGAPGEPGPPGDPGLPGAIGAQGTPGICDTSACQGAVLGGVGEKSGSRSS.

Positions 1-25 (MAGPRACAPLLLLLLLGELLAAAGA) are cleaved as a signal peptide. Disordered stretches follow at residues 26 to 521 (QRVG…KEAS) and 548 to 665 (LAPG…CDTS). The triple-helical region 3 (COL3) stretch occupies residues 29–519 (GLPGPPGPPG…TGKPGVPGKE (491 aa)). Pro residues-rich tracts occupy residues 31–42 (PGPPGPPGPPGK) and 55–64 (PGLPGPPGPK). Residues 66–82 (APGKPGKPGEAGLPGLP) show a composition bias toward low complexity. A compositionally biased stretch (gly residues) spans 130–139 (GPPGGIGLRG). 2 stretches are compositionally biased toward pro residues: residues 140 to 161 (PPGPSGLPGLPGPPGPPGPPGH) and 177 to 188 (ICPPGPPGPPGM). Residues 200 to 212 (EQGEVGKDGEKGD) show a composition bias toward basic and acidic residues. Positions 221–237 (LPGSVGLQGPRGLRGLP) are enriched in low complexity. Composition is skewed to basic and acidic residues over residues 264–282 (AGDRGERGPEGFRGPKGDL) and 344–356 (SKGEKGERGRAGE). The Cell attachment site motif lies at 423–425 (RGD). The N-linked (GlcNAc...) asparagine glycan is linked to asparagine 483. Over residues 498-507 (LGLQGVPGVP) the composition is skewed to low complexity. The tract at residues 520-550 (ASEQRIRELCGGMISEQIAQLAAHLRKPLAP) is nonhelical region 3 (NC3). The interval 551–630 (GSIGRPGPAG…QGPQGVPGTS (80 aa)) is triple-helical region 2 (COL2). Residues 558–568 (PAGPPGPPGPP) show a composition bias toward pro residues. The span at 570 to 586 (SIGHPGARGPPGYRGPT) shows a compositional bias: low complexity. The Cell attachment site signature appears at 601–603 (RGD). Residues 617–628 (DQGPQGPQGVPG) are compositionally biased toward low complexity. Residues 631–632 (KD) form a nonhelical region 2 (NC2) region. Residues 633–661 (GQDGAPGEPGPPGDPGLPGAIGAQGTPGI) are triple-helical region 1 (COL1). The nonhelical region 1 (NC1) stretch occupies residues 662 to 684 (CDTSACQGAVLGGVGEKSGSRSS).

Belongs to the fibril-associated collagens with interrupted helices (FACIT) family. In terms of assembly, heterotrimer of an alpha 1(IX), an alpha 2(IX) and an alpha 3(IX) chain. Covalently linked to the telopeptides of type II collagen by lysine-derived cross-links. In terms of processing, prolines at the third position of the tripeptide repeating unit (G-X-Y) are hydroxylated in some or all of the chains.

The protein localises to the secreted. Its subcellular location is the extracellular space. It is found in the extracellular matrix. Its function is as follows. Structural component of hyaline cartilage and vitreous of the eye. This is Collagen alpha-3(IX) chain (COL9A3) from Homo sapiens (Human).